A 152-amino-acid chain; its full sequence is Chemokine-like factor (152 aa).

Residues 13–133 (FCCTLKCFVK…DCALMCQKLR (121 aa)) form the MARVEL domain. 4 helical membrane-spanning segments follow: residues 19 to 39 (CFVK…FIVG), 46 to 66 (IVIT…YTCG), 81 to 101 (VINS…ALIP), and 108 to 128 (ILGG…CALM).

It belongs to the chemokine-like factor family. As to expression, ubiquitous.

The protein localises to the membrane. Functionally, may play an important role in inflammation and regeneration of skeletal muscle. Essential for embryonic development. The protein is Chemokine-like factor (Cklf) of Mus musculus (Mouse).